The chain runs to 362 residues: Peptide chain release factor 1 (362 aa).

N5-methylglutamine is present on Gln-237.

This sequence belongs to the prokaryotic/mitochondrial release factor family. Methylated by PrmC. Methylation increases the termination efficiency of RF1.

It is found in the cytoplasm. Functionally, peptide chain release factor 1 directs the termination of translation in response to the peptide chain termination codons UAG and UAA. This chain is Peptide chain release factor 1, found in Marinomonas sp. (strain MWYL1).